A 293-amino-acid chain; its full sequence is ATP synthase gamma chain (293 aa).

This sequence belongs to the ATPase gamma chain family. In terms of assembly, F-type ATPases have 2 components, CF(1) - the catalytic core - and CF(0) - the membrane proton channel. CF(1) has five subunits: alpha(3), beta(3), gamma(1), delta(1), epsilon(1). CF(0) has three main subunits: a, b and c.

Its subcellular location is the cell inner membrane. Produces ATP from ADP in the presence of a proton gradient across the membrane. The gamma chain is believed to be important in regulating ATPase activity and the flow of protons through the CF(0) complex. This is ATP synthase gamma chain from Allorhizobium ampelinum (strain ATCC BAA-846 / DSM 112012 / S4) (Agrobacterium vitis (strain S4)).